Consider the following 373-residue polypeptide: STE20-related kinase adapter protein alpha (373 aa).

One can recognise a Protein kinase domain in the interval 11 to 321 (YELLTVIGKG…ASTLLNHSFF (311 aa)). Over residues 255–281 (STSRSAANSGLSESLAPSTPRTSNGDS) the composition is skewed to polar residues. Positions 255 to 288 (STSRSAANSGLSESLAPSTPRTSNGDSPSHPYHR) are disordered. Residue T361 is modified to Phosphothreonine; by LKB1.

The protein belongs to the protein kinase superfamily. STE Ser/Thr protein kinase family. STE20 subfamily. As to quaternary structure, component of a trimeric complex composed of STK11/LKB1, STRAD (STRADA or STRADB) and CAB39/MO25 (CAB39/MO25alpha or CAB39L/MO25beta): the complex tethers STK11/LKB1 in the cytoplasm and stimulates its catalytic activity.

The protein resides in the nucleus. Its subcellular location is the cytoplasm. Its function is as follows. Pseudokinase which, in complex with CAB39/MO25 (CAB39/MO25alpha or CAB39L/MO25beta), binds to and activates STK11/LKB1. Adopts a closed conformation typical of active protein kinases and binds STK11/LKB1 as a pseudosubstrate, promoting conformational change of STK11/LKB1 in an active conformation. The polypeptide is STE20-related kinase adapter protein alpha (STRADA) (Bos taurus (Bovine)).